Here is an 89-residue protein sequence, read N- to C-terminus: Small ribosomal subunit protein uS15 (89 aa).

The protein belongs to the universal ribosomal protein uS15 family. Part of the 30S ribosomal subunit. Forms a bridge to the 50S subunit in the 70S ribosome, contacting the 23S rRNA.

In terms of biological role, one of the primary rRNA binding proteins, it binds directly to 16S rRNA where it helps nucleate assembly of the platform of the 30S subunit by binding and bridging several RNA helices of the 16S rRNA. Forms an intersubunit bridge (bridge B4) with the 23S rRNA of the 50S subunit in the ribosome. The chain is Small ribosomal subunit protein uS15 from Desulfatibacillum aliphaticivorans.